Here is a 468-residue protein sequence, read N- to C-terminus: MTMAGQTINDRLLAARHSLAGQGLAKSVCKATTEECIGPKKKHLDYLVHCTNEPNVSIPHLANLLIERSQNANWVVVYKSLITTHHLMAYGNERFMQYLASSNSTFNLSSFLDKGTVQDGGMGVPGGRMGYDMSPFIRRYAKYLNEKSLSYRAMAFDFCKVKRGKEEGSLRSMNAEKLLKTLPVLQAQLDALLEFDCQSNDLSNGVINMSFMLLFRDLIRLFACYNDGIINLLEKYFDMNKKHARDALDLYKKFLVRMDRVGEFLKVAENVGIDKGDIPDLTKAPSSLLDALEQHLATLEGRKVSAANTPTQSSSSAFGTAAASSKFDTTNGIDEQLKAQVLAEEEAAMNQYKSKVSSPTSSGAAGASAALTNPFLSSPPAAQAGQPIVDLFGAASAQPAAAAAATKASDDLLQLGNPFADMFDASGGGAAAVGATGNAGDGTAKYDGGAGSSPFDWGATDDDGGAAQ.

Positions 16–158 (RHSLAGQGLA…LSYRAMAFDF (143 aa)) constitute an ENTH domain. Positions 438–468 (NAGDGTAKYDGGAGSSPFDWGATDDDGGAAQ) are disordered. Acidic residues predominate over residues 459–468 (ATDDDGGAAQ).

The protein belongs to the PICALM/SNAP91 family. Binds clathrin and phosphatidylinositol 4,5-bisphosphate. In embryos, expression is seen in central and peripheral nervous systems (brain and ventral nerve cord) and Garland cells. Coexpressed with clathrin at presynaptic boutons of neuromuscular junctions.

Its subcellular location is the membrane. The protein resides in the clathrin-coated pit. The protein localises to the golgi apparatus. It is found in the cytoplasmic vesicle. It localises to the clathrin-coated vesicle. Functionally, assembly protein recruiting clathrin and adaptor protein complex 2 (AP2) to cell membranes at sites of coated-pit formation and clathrin-vesicle assembly. May be required to determine the amount of membrane to be recycled, possibly by regulating the size of the clathrin cage. Involved in AP2-dependent clathrin-mediated endocytosis at the neuromuscular junction. In Drosophila melanogaster (Fruit fly), this protein is Phosphatidylinositol-binding clathrin assembly protein LAP (lap).